Here is a 412-residue protein sequence, read N- to C-terminus: Chorismate synthase (412 aa).

NADP(+)-binding residues include Arg40 and Arg46. Residues 134 to 136, 255 to 256, Gly299, 314 to 318, and Arg340 each bind FMN; these read RAS, QA, and KPIAT.

This sequence belongs to the chorismate synthase family. Homotetramer. Requires FMNH2 as cofactor.

It catalyses the reaction 5-O-(1-carboxyvinyl)-3-phosphoshikimate = chorismate + phosphate. It functions in the pathway metabolic intermediate biosynthesis; chorismate biosynthesis; chorismate from D-erythrose 4-phosphate and phosphoenolpyruvate: step 7/7. Functionally, catalyzes the anti-1,4-elimination of the C-3 phosphate and the C-6 proR hydrogen from 5-enolpyruvylshikimate-3-phosphate (EPSP) to yield chorismate, which is the branch point compound that serves as the starting substrate for the three terminal pathways of aromatic amino acid biosynthesis. This reaction introduces a second double bond into the aromatic ring system. In Clavibacter michiganensis subsp. michiganensis (strain NCPPB 382), this protein is Chorismate synthase.